A 321-amino-acid polypeptide reads, in one-letter code: Cytochrome c biogenesis protein CcsA (321 aa).

8 helical membrane passes run I9–L29, G44–G64, L71–F91, L97–L117, M143–I163, V227–N247, T261–H275, and A288–L308.

Belongs to the CcmF/CycK/Ccl1/NrfE/CcsA family. As to quaternary structure, may interact with Ccs1.

The protein resides in the plastid. Its subcellular location is the chloroplast thylakoid membrane. In terms of biological role, required during biogenesis of c-type cytochromes (cytochrome c6 and cytochrome f) at the step of heme attachment. The polypeptide is Cytochrome c biogenesis protein CcsA (Nandina domestica (Heavenly bamboo)).